A 218-amino-acid chain; its full sequence is Mitochondrial import inner membrane translocase subunit TIM17-1 (218 aa).

Transmembrane regions (helical) follow at residues 19-36, 66-82, 89-105, and 116-133; these read VGGA…YHLI, FSVW…ALVY, PWNS…FLSL, and ALVG…GIML.

It belongs to the Tim17/Tim22/Tim23 family. In terms of assembly, component of the TIM17:23 complex at least composed of TIM23, TIM17 and TIM50. The complex interacts with the TIM44 component of the PAM complex. As to expression, expressed in flowers, leaves and cotyledons, and at very low levels in roots.

It localises to the mitochondrion inner membrane. Essential component of the TIM17:23 complex, a complex that mediates the translocation of transit peptide-containing proteins across the mitochondrial inner membrane. Links the inner and outer membranes. The sequence is that of Mitochondrial import inner membrane translocase subunit TIM17-1 (TIM17-1) from Arabidopsis thaliana (Mouse-ear cress).